The following is a 288-amino-acid chain: MSQLIFIPLLISLLVTKGKIRFLNNFESVLALSLHYGILVLALPIFILLYKAKKQPCSILLKVTTEPIILSAYATTFSTAFLAITINALFGLIIAWILVKYEFTGKETLDAIVDLPFALPASVGGLTLMTVYSDRGWMGPICSGLGLKIVFSRLGVPMATIFVSLPFVVRTIQPVLQDVEEELEEAAWCIGASPWTTFCQISLPLLTPSLLTGTALGFSRAIGEYGSIVLIACNIPMKDLVISVLIFQKLEQYDYQGAIVVATIVLIASFGGLLIINKVQLWKQNLSK.

7 consecutive transmembrane segments (helical) span residues 4-23 (LIFI…IRFL), 29-49 (VLAL…FILL), 79-99 (TAFL…WILV), 111-131 (AIVD…LMTV), 149-169 (IVFS…PFVV), 227-247 (SIVL…VLIF), and 257-277 (GAIV…LIIN). The ABC transmembrane type-1 domain occupies 73–276 (YATTFSTAFL…IASFGGLLII (204 aa)).

The protein belongs to the binding-protein-dependent transport system permease family. CysTW subfamily.

It localises to the plastid. The protein localises to the chloroplast membrane. In terms of biological role, part of the ABC transporter complex cysAWTP (TC 3.A.1.6.1) involved in sulfate/thiosulfate import. Probably responsible for the translocation of the substrate across the membrane. The protein is Probable sulfate transport system permease protein cysT (cysT) of Anthoceros angustus (Hornwort).